The primary structure comprises 151 residues: Large ribosomal subunit protein uL15 (151 aa).

The disordered stretch occupies residues 1–58 (MELNQLKSVPKARNHKTKTLGRGHGSGLGKTSGRGQKGQKARKSGLTRPGFEGGQTPL). Residues 10-21 (PKARNHKTKTLG) show a composition bias toward basic residues. A compositionally biased stretch (gly residues) spans 22 to 36 (RGHGSGLGKTSGRGQ).

The protein belongs to the universal ribosomal protein uL15 family. In terms of assembly, part of the 50S ribosomal subunit.

Its function is as follows. Binds to the 23S rRNA. The chain is Large ribosomal subunit protein uL15 from Mycoplasma pneumoniae (strain ATCC 29342 / M129 / Subtype 1) (Mycoplasmoides pneumoniae).